Consider the following 355-residue polypeptide: Protein-tyrosine sulfotransferase 1 (355 aa).

Residues 1–8 (MIGKLKQN) are Cytoplasmic-facing. A helical; Signal-anchor for type II membrane protein transmembrane segment spans residues 9-25 (LLVACLVISSVTVFYLC). Topologically, residues 26 to 355 (RHAMDCHHRI…QKSPEKPNPS (330 aa)) are lumenal. N55 carries an N-linked (GlcNAc...) asparagine glycan. 3'-phosphoadenylyl sulfate is bound at residue 76-80 (RSGTT). An intrachain disulfide couples C94 to C154. The active-site Proton donor/acceptor is the E97. An interaction with peptide substrate region spans residues 99 to 103 (RVIPR). 3'-phosphoadenylyl sulfate-binding residues include R181, S189, and R193. A disulfide bridge connects residues C223 and C230. Residues Y235, 282–291 (STDQVIKPVN), and K297 contribute to the 3'-phosphoadenylyl sulfate site. The tract at residues 325-355 (HANPPNYGRPDPLVLDNTRRLQKSPEKPNPS) is disordered. Residues 341–355 (NTRRLQKSPEKPNPS) are compositionally biased toward basic and acidic residues.

Belongs to the protein sulfotransferase family.

It is found in the golgi apparatus membrane. It catalyses the reaction L-tyrosyl-[protein] + 3'-phosphoadenylyl sulfate = O-sulfo-L-tyrosine-[protein] + adenosine 3',5'-bisphosphate + H(+). In terms of biological role, catalyzes the O-sulfation of tyrosine residues within acidic motifs of polypeptides, using 3'-phosphoadenylyl sulfate (PAPS) as cosubstrate. The protein is Protein-tyrosine sulfotransferase 1 (tpst1) of Danio rerio (Zebrafish).